Reading from the N-terminus, the 249-residue chain is AA9 family lytic polysaccharide monooxygenase A (249 aa).

Residues 1-21 (MALSKIAALSTILASASLVAG) form the signal peptide. Histidine 22 lines the Cu(2+) pocket. The residue at position 22 (histidine 22) is a Methylhistidine. N-linked (GlcNAc...) asparagine glycans are attached at residues asparagine 34 and asparagine 80. Disulfide bonds link cysteine 77/cysteine 199 and cysteine 118/cysteine 122. A Cu(2+)-binding site is contributed by histidine 107. O2-binding residues include histidine 185 and glutamine 194. Tyrosine 196 serves as a coordination point for Cu(2+).

It belongs to the polysaccharide monooxygenase AA9 family. It depends on Cu(2+) as a cofactor. In terms of processing, the catalytically essential N-terminal histidine His-22 is post-translationally modified by methylation to prevent protonation of the histidine side chain, and protect the critical active site of the enzyme from oxidative damage.

It localises to the secreted. It catalyses the reaction [(1-&gt;4)-beta-D-glucosyl]n+m + reduced acceptor + O2 = 4-dehydro-beta-D-glucosyl-[(1-&gt;4)-beta-D-glucosyl]n-1 + [(1-&gt;4)-beta-D-glucosyl]m + acceptor + H2O.. Its function is as follows. Lytic polysaccharide monooxygenase (LPMO) that exhibits a mixed C1/C4 oxidative cleavage activity on cellulose and xyloglucan. Catalysis by LPMOs requires the reduction of the active-site copper from Cu(II) to Cu(I) by a reducing agent and H(2)O(2) or O(2) as a cosubstrate. Shows a higher boosting effect with cellulases on the enzymatic saccharification of complex lignocellulosic substrates associated with xyloglucan than on the lignocellulosic substrates without xyloglucan. The oxidative cleavage of xyloglucan by LPMO9A may facilitate to open up the sterical hindrance of cellulose by xyloglucan and thereby increase accessibility for cellulase to lignocellulosic substrates. The sequence is that of AA9 family lytic polysaccharide monooxygenase A from Penicillium parvum (Eupenicillium parvum).